The chain runs to 351 residues: Uroporphyrinogen decarboxylase (351 aa).

Substrate-binding positions include 25–29, Asp-74, Tyr-151, Ser-206, and His-325; that span reads RQAGR.

Belongs to the uroporphyrinogen decarboxylase family. In terms of assembly, homodimer.

Its subcellular location is the cytoplasm. The enzyme catalyses uroporphyrinogen III + 4 H(+) = coproporphyrinogen III + 4 CO2. It participates in porphyrin-containing compound metabolism; protoporphyrin-IX biosynthesis; coproporphyrinogen-III from 5-aminolevulinate: step 4/4. In terms of biological role, catalyzes the decarboxylation of four acetate groups of uroporphyrinogen-III to yield coproporphyrinogen-III. This Chlorobium phaeobacteroides (strain DSM 266 / SMG 266 / 2430) protein is Uroporphyrinogen decarboxylase.